The sequence spans 127 residues: Protein yippee-like 4 (127 aa).

The 98-residue stretch at 27–124 (RTYSCVHCRA…IEMSHMVKDN (98 aa)) folds into the Yippee domain. Zn(2+) contacts are provided by C31, C34, C87, and C90. A phosphothreonine mark is found at T92 and T93. Y98 carries the post-translational modification Phosphotyrosine.

The protein belongs to the yippee family. Detected in brain, spleen and testis.

The protein resides in the nucleus. Its subcellular location is the nucleolus. The protein is Protein yippee-like 4 (Ypel4) of Mus musculus (Mouse).